Here is a 105-residue protein sequence, read N- to C-terminus: SAGA-associated factor 11 (105 aa).

An SGF11-type zinc finger spans residues 76–97 (FRCPNCSRDLSANRFAAHLERC).

This sequence belongs to the SGF11 family. As to quaternary structure, component of the 1.8 MDa SAGA transcription coactivator-HAT complex. SAGA is built of 5 distinct domains with specialized functions. Within the SAGA complex, SUS1, SGF11, SGF73 and UBP8 form an additional subcomplex of SAGA called the DUB module (deubiquitination module). Interacts directly with SGF73, SUS1 and UBP8.

Its subcellular location is the nucleus. Its function is as follows. Functions as a component of the transcription regulatory histone acetylation (HAT) complex SAGA. At the promoters, SAGA is required for recruitment of the basal transcription machinery. It influences RNA polymerase II transcriptional activity through different activities such as TBP interaction and promoter selectivity, interaction with transcription activators, and chromatin modification through histone acetylation and deubiquitination. SAGA acetylates nucleosomal histone H3 to some extent (to form H3K9ac, H3K14ac, H3K18ac and H3K23ac). SAGA interacts with DNA via upstream activating sequences (UASs). Involved in transcriptional regulation of a subset of SAGA-regulated genes. Within the SAGA complex, participates in a subcomplex, that specifically deubiquitinates histones H2B. The polypeptide is SAGA-associated factor 11 (Eremothecium gossypii (strain ATCC 10895 / CBS 109.51 / FGSC 9923 / NRRL Y-1056) (Yeast)).